The sequence spans 188 residues: MTLGITEVKKGMVLKVEGDLYSVVKTEFVNPGKGSAFIRTKLKNLTKNSSIERTFKAAEKLESVELEKRNMTICYTEGNDIIFMDSNDFEQMPVSKEYVEDILPFLKEETPMEVTFYEGKPIGVIPPNFSILEVTYAEEGLKGDTSGTAQKRVTVETGGEINVPIFVKQGDVIKIDLRDLTYVERVSR.

Belongs to the elongation factor P family.

The protein resides in the cytoplasm. It functions in the pathway protein biosynthesis; polypeptide chain elongation. Functionally, involved in peptide bond synthesis. Stimulates efficient translation and peptide-bond synthesis on native or reconstituted 70S ribosomes in vitro. Probably functions indirectly by altering the affinity of the ribosome for aminoacyl-tRNA, thus increasing their reactivity as acceptors for peptidyl transferase. The protein is Elongation factor P of Leptospira borgpetersenii serovar Hardjo-bovis (strain JB197).